Consider the following 1331-residue polypeptide: MQAAPRAGCGAALLLWIVSSCLCRAWTAPSTSQKCDEPLVSGLPHVAFSSSSSISGSYSPGYAKINKRGGAGGWSPSDSDHYQWLQVDFGNRKQISAIATQGRYSSSDWVTQYRMLYSDTGRNWKPYHQDGNIWAFPGNINSDGVVRHELQHPIIARYVRIVPLDWNGEGRIGLRIEVYGCSYWADVINFDGHVVLPYRFRNKKMKTLKDVIALNFKTSESEGVILHGEGQQGDYITLELKKAKLVLSLNLGSNQLGPIYGHTSVMTGSLLDDHHWHSVVIERQGRSINLTLDRSMQHFRTNGEFDYLDLDYEITFGGIPFSGKPSSSSRKNFKGCMESINYNGVNITDLARRKKLEPSNVGNLSFSCVEPYTVPVFFNATSYLEVPGRLNQDLFSVSFQFRTWNPNGLLVFSHFADNLGNVEIDLTESKVGVHINITQTKMSQIDISSGSGLNDGQWHEVRFLAKENFAILTIDGDEASAVRTNSPLQVKTGEKYFFGGFLNQMNNSSHSVLQPSFQGCMQLIQVDDQLVNLYEVAQRKPGSFANVSIDMCAIIDRCVPNHCEHGGKCSQTWDSFKCTCDETGYSGATCHNSIYEPSCEAYKHLGQTSNYYWIDPDGSGPLGPLKVYCNMTEDKVWTIVSHDLQMQTPVVGYNPEKYSVTQLVYSASMDQISAITDSAEYCEQYVSYFCKMSRLLNTPDGSPYTWWVGKANEKHYYWGGSGPGIQKCACGIERNCTDPKYYCNCDADYKQWRKDAGFLSYKDHLPVSQVVVGDTDRQGSEAKLSVGPLRCQGDRNYWNAASFPNPSSYLHFSTFQGETSADISFYFKTLTPWGVFLENMGKEDFIKLELKSATEVSFSFDVGNGPVEIVVRSPTPLNDDQWHRVTAERNVKQASLQVDRLPQQIRKAPTEGHTRLELYSQLFVGGAGGQQGFLGCIRSLRMNGVTLDLEERAKVTSGFISGCSGHCTSYGTNCENGGKCLERYHGYSCDCSNTAYDGTFCNKDVGAFFEEGMWLRYNFQAPATNARDSSSRVDNAPDQQNSHPDLAQEEIRFSFSTTKAPCILLYISSFTTDFLAVLVKPTGSLQIRYNLGGTREPYNIDVDHRNMANGQPHSVNITRHEKTIFLKLDHYPSVSYHLPSSSDTLFNSPKSLFLGKVIETGKIDQEIHKYNTPGFTGCLSRVQFNQIAPLKAALRQTNASAHVHIQGELVESNCGASPLTLSPMSSATDPWHLDHLDSASADFPYNPGQGQAIRNGVNRNSAIIGGVIAVVIFTILCTLVFLIRYMFRHKGTYHTNEAKGAESAESADAAIMNNDPNFTETIDESKKEWLI.

Positions 1-27 (MQAAPRAGCGAALLLWIVSSCLCRAWT) are cleaved as a signal peptide. Residues 28 to 1262 (APSTSQKCDE…IRNGVNRNSA (1235 aa)) lie on the Extracellular side of the membrane. Residues 35–181 (CDEPLVSGLP…IGLRIEVYGC (147 aa)) enclose the F5/8 type C domain. A disulfide bond links Cys35 and Cys181. Residues 216–368 (FKTSESEGVI…SNVGNLSFSC (153 aa)) form the Laminin G-like 1 domain. 8 N-linked (GlcNAc...) asparagine glycosylation sites follow: Asn289, Asn346, Asn363, Asn379, Asn436, Asn506, Asn507, and Asn546. Cys336 and Cys368 are oxidised to a cystine. One can recognise a Laminin G-like 2 domain in the interval 401–552 (FRTWNPNGLL…SFANVSIDMC (152 aa)). Cystine bridges form between Cys520–Cys552, Cys558–Cys569, Cys563–Cys578, and Cys580–Cys590. The region spanning 554 to 591 (IIDRCVPNHCEHGGKCSQTWDSFKCTCDETGYSGATCH) is the EGF-like 1 domain. The Fibrinogen C-terminal domain maps to 592–798 (NSIYEPSCEA…LRCQGDRNYW (207 aa)). N-linked (GlcNAc...) asparagine glycans are attached at residues Asn630 and Asn735. The Laminin G-like 3 domain occupies 799–963 (NAASFPNPSS…KVTSGFISGC (165 aa)). 4 disulfides stabilise this stretch: Cys936-Cys963, Cys967-Cys980, Cys974-Cys989, and Cys991-Cys1001. Residues 963 to 1002 (CSGHCTSYGTNCENGGKCLERYHGYSCDCSNTAYDGTFCN) enclose the EGF-like 2 domain. The interval 1026–1045 (ARDSSSRVDNAPDQQNSHPD) is disordered. Residues 1055–1214 (FSTTKAPCIL…IQGELVESNC (160 aa)) form the Laminin G-like 4 domain. 2 N-linked (GlcNAc...) asparagine glycosylation sites follow: Asn1116 and Asn1198. Cys1178 and Cys1214 are joined by a disulfide. A helical membrane pass occupies residues 1263 to 1283 (IIGGVIAVVIFTILCTLVFLI). Residues 1284–1331 (RYMFRHKGTYHTNEAKGAESAESADAAIMNNDPNFTETIDESKKEWLI) are Cytoplasmic-facing. Phosphoserine is present on residues Ser1303 and Ser1306.

Belongs to the neurexin family. As to quaternary structure, interacts (via C-terminus) with KCNA2. Interacts with GPR37. Predominantly expressed in nervous system.

Its subcellular location is the membrane. The protein localises to the cell projection. It localises to the axon. The protein resides in the cell junction. It is found in the paranodal septate junction. Functionally, required for gap junction formation. Required, with CNTNAP1, for radial and longitudinal organization of myelinated axons. Plays a role in the formation of functional distinct domains critical for saltatory conduction of nerve impulses in myelinated nerve fibers. Demarcates the juxtaparanodal region of the axo-glial junction. This chain is Contactin-associated protein-like 2 (CNTNAP2), found in Homo sapiens (Human).